We begin with the raw amino-acid sequence, 193 residues long: Mediator of RNA polymerase II transcription subunit 30 (193 aa).

The tract at residues 1–20 (MSTPPLAASGMAPGPFAGPQ) is disordered. At Ser2 the chain carries N-acetylserine. Over residues 10 to 20 (GMAPGPFAGPQ) the composition is skewed to low complexity. Positions 71–93 (YQDRLAKLQDHLRQLSILFRKLR) form a coiled coil.

This sequence belongs to the Mediator complex subunit 30 family. Component of the Mediator complex, which is composed of MED1, MED4, MED6, MED7, MED8, MED9, MED10, MED11, MED12, MED13, MED13L, MED14, MED15, MED16, MED17, MED18, MED19, MED20, MED21, MED22, MED23, MED24, MED25, MED26, MED27, MED29, MED30, MED31, CCNC, CDK8 and CDC2L6/CDK11. The MED12, MED13, CCNC and CDK8 subunits form a distinct module termed the CDK8 module. Mediator containing the CDK8 module is less active than Mediator lacking this module in supporting transcriptional activation. Individual preparations of the Mediator complex lacking one or more distinct subunits have been variously termed ARC, CRSP, DRIP, PC2, SMCC and TRAP.

It localises to the nucleus. Its function is as follows. Component of the Mediator complex, a coactivator involved in the regulated transcription of nearly all RNA polymerase II-dependent genes. Mediator functions as a bridge to convey information from gene-specific regulatory proteins to the basal RNA polymerase II transcription machinery. Mediator is recruited to promoters by direct interactions with regulatory proteins and serves as a scaffold for the assembly of a functional preinitiation complex with RNA polymerase II and the general transcription factors. The sequence is that of Mediator of RNA polymerase II transcription subunit 30 (MED30) from Bos taurus (Bovine).